Here is a 76-residue protein sequence, read N- to C-terminus: ATP synthase subunit 9, mitochondrial (76 aa).

M1 carries the N-formylmethionine modification. A run of 2 helical transmembrane segments spans residues I14 to I34 and I52 to L72.

Belongs to the ATPase C chain family. In terms of assembly, F-type ATPases have 2 components, CF(1) - the catalytic core - and CF(0) - the membrane proton channel. In yeast, the dimeric form of ATP synthase consists of 18 polypeptides: alpha, beta, gamma, delta, epsilon, 4 (B), 5 (OSCP), 6 (A), 8, 9 (C), d, E (Tim11), f, g, h, i, j and k.

It is found in the mitochondrion membrane. Functionally, mitochondrial membrane ATP synthase (F(1)F(0) ATP synthase or Complex V) produces ATP from ADP in the presence of a proton gradient across the membrane which is generated by electron transport complexes of the respiratory chain. F-type ATPases consist of two structural domains, F(1) - containing the extramembraneous catalytic core and F(0) - containing the membrane proton channel, linked together by a central stalk and a peripheral stalk. During catalysis, ATP synthesis in the catalytic domain of F(1) is coupled via a rotary mechanism of the central stalk subunits to proton translocation. Part of the complex F(0) domain. A homomeric c-ring of probably 10 subunits is part of the complex rotary element. The protein is ATP synthase subunit 9, mitochondrial (ATP9) of Saccharomyces paradoxus (Yeast).